A 519-amino-acid chain; its full sequence is MDKLTATLAKVNYPSEVENGSMLLVVTLVILFLWFIIPSPVKRSNVSVPTVTLFNPYLPEFLSRVWFNSTAATVIYKGYRQHKDRAFRLLKPDGDIIVLSNKYVEELRQLPLTTLNALEAVFEDHVGKYTTILDDSHLHTEVIQKRLTPAINRLIPRIIDELDHGFAVEMPECEDKWVLIRPYEVFLRLVARAGARVFVGPDFCRTEKWLTASIDFTKNIFMTITLLRPIPSFLHPIIGPMLPSSRSLDTQLRYVQDELLGPEIVKRRQRQASGDPDYEKPDDFLQWMIDLAQNDKEGDPGNIAHRLLGLTSMAVVHTSAMSITHGLYDLITMAQWLEPLRQEIQEAMPDWKSSSYSSLVSLRRLDSFLKESQRFNPPGELSFHRVVKKDLVLSDGLRLPKGTHICMASGPIGMDTKYVSDPTTFDAFRYVDGDKAQSQFVHTSATSMHFGLGRYACPGRFFATFVLKAILSRFLVEYEFRFGPDQVGRPKNMLLGDKIVPNTSVDVYVRKRTGSRSTA.

The chain crosses the membrane as a helical span at residues 21–41; that stretch reads SMLLVVTLVILFLWFIIPSPV. Residue Cys457 participates in heme binding.

This sequence belongs to the cytochrome P450 family. Requires heme as cofactor.

The protein resides in the membrane. It functions in the pathway secondary metabolite biosynthesis. In terms of biological role, cytochrome P450 monooxygenase; part of the ATM2 gene cluster that mediates the biosynthesis of aflatrem, a tremorgenic mycotoxin with acute neurotoxic effects. Synthesis of geranylgeranyl diphosphate (GGPP) by AtmG (a GGPP synthase) precedes condensation of GGPP with indole 3-glycerol phosphate, followed by epoxidation and cyclization by AtmM (a FAD-dependent monooxygenase) and AtmC (a prenyltransferase) to produce paspaline. AtmB is also essential for paspaline production, but its exact role has not been identified yet. AtmP, a cytochrome P450 monooxygenase, subsequently converts paspaline to 13-desoxypaxilline via PC-M6 by removal of the C-30 methyl group and oxidation at C-10. AtmQ, a cytochrome P450 monooxygenase, then catalyzes the oxidation of 13-desoxypaxilline, first at C-7 to produce paspalicine and then at C-13 to form paspalinine. Finally, AtmD prenylates paspalinine to form aflatrem. In Aspergillus flavus, this protein is Cytochrome P450 monooxygenase AtmP.